A 263-amino-acid chain; its full sequence is Undecaprenyl-diphosphatase (263 aa).

Transmembrane regions (helical) follow at residues 40-60, 87-107, 109-129, 186-206, 219-239, and 243-263; these read PGVL…LVYF, LLII…DFFV, AFHN…LLFF, FSFL…LLEW, AGAV…MGVV, and RLYA…AISS.

It belongs to the UppP family.

The protein localises to the cell inner membrane. The enzyme catalyses di-trans,octa-cis-undecaprenyl diphosphate + H2O = di-trans,octa-cis-undecaprenyl phosphate + phosphate + H(+). Catalyzes the dephosphorylation of undecaprenyl diphosphate (UPP). Confers resistance to bacitracin. This is Undecaprenyl-diphosphatase from Syntrophotalea carbinolica (strain DSM 2380 / NBRC 103641 / GraBd1) (Pelobacter carbinolicus).